The following is a 350-amino-acid chain: MPQPAPLDFVVVGLNHQTAPVEVRERVAVRPEEEGALLGHLARHADEVLLLATCNRTEVYLAGVHGDPLAAFEGAWGHALLDHLYVYRGEAAVRHLYRVTAGLDSLVIGETQIQGQVKRAWQSARERGLSGTLMNKVVQGALAAGKRVRSHTGLSDKVVSVSSAAVELAQAALGELSQRRALILGAGETAELTLTHLRAAGVQDVLVVNRTAERARALAEKLGGRACPAEELSAALPEVDVVIASSAAPHYVVTAQNVREALAGRPGRAMFLIDISVPRILDPEIASVPGAHLYNLDDLTAVVQRNMQSRRAALPQAEAIIRELGSDLSRWYLTRETQLARQAELALACD.

Substrate-binding positions include 53–56 (TCNR), S105, 110–112 (ETQ), and Q116. The active-site Nucleophile is the C54. NADP(+) is bound at residue 185 to 190 (GAGETA).

Belongs to the glutamyl-tRNA reductase family. Homodimer.

The enzyme catalyses (S)-4-amino-5-oxopentanoate + tRNA(Glu) + NADP(+) = L-glutamyl-tRNA(Glu) + NADPH + H(+). It functions in the pathway porphyrin-containing compound metabolism; protoporphyrin-IX biosynthesis; 5-aminolevulinate from L-glutamyl-tRNA(Glu): step 1/2. Catalyzes the NADPH-dependent reduction of glutamyl-tRNA(Glu) to glutamate 1-semialdehyde (GSA). The sequence is that of Glutamyl-tRNA reductase from Deinococcus radiodurans (strain ATCC 13939 / DSM 20539 / JCM 16871 / CCUG 27074 / LMG 4051 / NBRC 15346 / NCIMB 9279 / VKM B-1422 / R1).